The following is a 548-amino-acid chain: Adenine deaminase (548 aa).

This sequence belongs to the metallo-dependent hydrolases superfamily. Adenine deaminase family. Mn(2+) is required as a cofactor.

The enzyme catalyses adenine + H2O + H(+) = hypoxanthine + NH4(+). The polypeptide is Adenine deaminase (Borreliella burgdorferi (strain ATCC 35210 / DSM 4680 / CIP 102532 / B31) (Borrelia burgdorferi)).